The following is a 161-amino-acid chain: Peptidyl-prolyl cis-trans isomerase (161 aa).

A PPIase cyclophilin-type domain is found at 6 to 160 (FFDIKAGDER…KKIIIEDCGE (155 aa)).

The protein belongs to the cyclophilin-type PPIase family. PPIase A subfamily. Found mainly in the tegument, gut epithelium, and muscle layers. Also found in the interior of the parasite.

The catalysed reaction is [protein]-peptidylproline (omega=180) = [protein]-peptidylproline (omega=0). Binds cyclosporin A (CsA). CsA mediates some of its effects via an inhibitory action on PPIase. In terms of biological role, PPIases accelerate the folding of proteins. It catalyzes the cis-trans isomerization of proline imidic peptide bonds in oligopeptides. The protein is Peptidyl-prolyl cis-trans isomerase of Schistosoma mansoni (Blood fluke).